The following is a 52-amino-acid chain: UPF0181 protein HD_1137 (52 aa).

This sequence belongs to the UPF0181 family.

This Haemophilus ducreyi (strain 35000HP / ATCC 700724) protein is UPF0181 protein HD_1137.